A 273-amino-acid polypeptide reads, in one-letter code: Proteasome subunit beta type-10 (273 aa).

M1 carries the N-acetylmethionine modification. Residues 1 to 39 (MLKQAVEHRGGFSFENCQRNASLEHVLPGLRVPLARKTG) constitute a propeptide, removed in mature form. T40 (nucleophile) is an active-site residue. At S230 the chain carries Phosphoserine.

Belongs to the peptidase T1B family. As to quaternary structure, the 26S proteasome consists of a 20S proteasome core and two 19S regulatory subunits. The 20S proteasome core is composed of 28 subunits that are arranged in four stacked rings, resulting in a barrel-shaped structure. The two end rings are each formed by seven alpha subunits, and the two central rings are each formed by seven beta subunits. The catalytic chamber with the active sites is on the inside of the barrel. Component of the immunoproteasome, where it displaces the equivalent housekeeping subunit PSMB7. Component of the spermatoproteasome, a form of the proteasome specifically found in testis. Autocleaved. The resulting N-terminal Thr residue of the mature subunit is responsible for the nucleophile proteolytic activity.

It localises to the cytoplasm. The protein resides in the nucleus. It catalyses the reaction Cleavage of peptide bonds with very broad specificity.. In terms of biological role, the proteasome is a multicatalytic proteinase complex which is characterized by its ability to cleave peptides with Arg, Phe, Tyr, Leu, and Glu adjacent to the leaving group at neutral or slightly basic pH. The proteasome has an ATP-dependent proteolytic activity. This subunit is involved in antigen processing to generate class I binding peptides. This is Proteasome subunit beta type-10 (Psmb10) from Rattus norvegicus (Rat).